We begin with the raw amino-acid sequence, 75 residues long: MNITKAYVIFFLVVILTNSLSNSDALASSVIETTKNDVCSTPCTIRYGTFECFQDCILDHFRDGNCINGRCCCKY.

The first 19 residues, Met1 to Ser19, serve as a signal peptide directing secretion. 4 disulfides stabilise this stretch: Cys39–Cys73, Cys43–Cys66, Cys52–Cys71, and Cys56–Cys72.

Belongs to the DEFL family.

It localises to the secreted. This Arabidopsis thaliana (Mouse-ear cress) protein is Putative defensin-like protein 55.